A 138-amino-acid polypeptide reads, in one-letter code: MRVLGLDLGTKTLGVAVSDELGWTAQGIETISIDEERGEYGLKRLREIIDEYEVDTIVVGFPKNMNGTVGPRAEASQRFAKLLESEFSLPVILWDERLSTMAAERMLITADVSRKKRKQVIDKMAAVVILQSYLDSKQ.

The protein belongs to the YqgF nuclease family.

It localises to the cytoplasm. Functionally, could be a nuclease involved in processing of the 5'-end of pre-16S rRNA. In Geobacillus sp. (strain WCH70), this protein is Putative pre-16S rRNA nuclease.